The primary structure comprises 317 residues: Serpentine receptor class delta-26 (317 aa).

7 helical membrane passes run 5 to 25 (LLHTVLSVTGVTLNAFMMYLA), 38 to 58 (AIITIKTFTDILTSAMSFFVM), 83 to 103 (ACYVGHMFMLCFLECNLIWMI), 122 to 142 (SLVFVALCLSIPSFIHMAAWI), 176 to 196 (ITLILQLFITSVLVLIAYAWI), 227 to 247 (FQVFLPTFIFLGFFIFAAMFG), and 258 to 278 (LVSIAFMFSPICSPFSYILFV).

This sequence belongs to the nematode receptor-like protein srd family.

It is found in the membrane. This chain is Serpentine receptor class delta-26 (srd-26), found in Caenorhabditis elegans.